The chain runs to 218 residues: GTP cyclohydrolase 1 (218 aa).

Zn(2+)-binding residues include cysteine 109, histidine 112, and cysteine 180.

It belongs to the GTP cyclohydrolase I family. In terms of assembly, toroid-shaped homodecamer, composed of two pentamers of five dimers.

The enzyme catalyses GTP + H2O = 7,8-dihydroneopterin 3'-triphosphate + formate + H(+). Its pathway is cofactor biosynthesis; 7,8-dihydroneopterin triphosphate biosynthesis; 7,8-dihydroneopterin triphosphate from GTP: step 1/1. The chain is GTP cyclohydrolase 1 from Haemophilus influenzae (strain 86-028NP).